The following is a 105-amino-acid chain: MTGKAKPKKHTAKEIQAKIDAALTNRGGGKAGIADRTGKEKGGHAKYECPHCKITAPGLKTMQIHHESKHPNIIYEESKLVNLHAVLAPVAESKPKPGIRGSLKK.

The segment at 26–46 (RGGGKAGIADRTGKEKGGHAK) is disordered. Residues 36-46 (RTGKEKGGHAK) show a composition bias toward basic and acidic residues.

In terms of tissue distribution, mainly expressed in the epidermis.

Its subcellular location is the nucleus. The protein localises to the cytoplasm. It is found in the stress granule. Functionally, required for acclimation to reactive oxygen species (ROS) responses downstream of beta-cyclocitral (beta-cc) or mediated by dihydroactinidiolide, including singlet oxygen 1O(2) detoxification reactions, especially upon light-mediated photooxidative stress, and leading to programmed cell death. Prevents leaf senescence. Involved in cold acclimation. This Arabidopsis thaliana (Mouse-ear cress) protein is Protein METHYLENE BLUE SENSITIVITY 1.